Reading from the N-terminus, the 221-residue chain is NEDD8 ultimate buster 1 (221 aa).

UBA domains lie at L1–N19, E30–N76, and S95–N135. Residues G136–L193 form a disordered region. Residues S146–S168 show a composition bias toward low complexity. Positions T169–L193 are enriched in acidic residues.

As to quaternary structure, directly interacts with NEDD8 and PSMD4/S5a, a member of the regulatory subunit of the 26S proteasome. Interacts with AIPL1.

It localises to the nucleus. Specific down-regulator of the NEDD8 conjugation system. Recruits NEDD8 and its conjugates to the proteasome for degradation. This Bos taurus (Bovine) protein is NEDD8 ultimate buster 1 (NUB1).